The following is a 1051-amino-acid chain: Carbamoyl phosphate synthase large chain (1051 aa).

The segment at methionine 1–aspartate 399 is carboxyphosphate synthetic domain. ATP-binding residues include arginine 127, arginine 167, glycine 173, glycine 174, lysine 206, leucine 208, glutamate 213, glycine 239, valine 240, histidine 241, glutamine 282, and glutamate 296. Residues arginine 131–leucine 325 form the ATP-grasp 1 domain. Mg(2+) contacts are provided by glutamine 282, glutamate 296, and asparagine 298. Mn(2+) is bound by residues glutamine 282, glutamate 296, and asparagine 298. The interval isoleucine 400–isoleucine 548 is oligomerization domain. The segment at glutamate 549–asparagine 930 is carbamoyl phosphate synthetic domain. In terms of domain architecture, ATP-grasp 2 spans serine 673–phenylalanine 863. Arginine 709, lysine 748, isoleucine 750, glutamate 755, glycine 779, valine 780, histidine 781, serine 782, glutamine 822, and glutamate 834 together coordinate ATP. Mg(2+) contacts are provided by glutamine 822, glutamate 834, and asparagine 836. Glutamine 822, glutamate 834, and asparagine 836 together coordinate Mn(2+). The MGS-like domain occupies asparagine 930–isoleucine 1051. Residues arginine 931–isoleucine 1051 are allosteric domain.

This sequence belongs to the CarB family. In terms of assembly, composed of two chains; the small (or glutamine) chain promotes the hydrolysis of glutamine to ammonia, which is used by the large (or ammonia) chain to synthesize carbamoyl phosphate. Tetramer of heterodimers (alpha,beta)4. It depends on Mg(2+) as a cofactor. Requires Mn(2+) as cofactor.

The catalysed reaction is hydrogencarbonate + L-glutamine + 2 ATP + H2O = carbamoyl phosphate + L-glutamate + 2 ADP + phosphate + 2 H(+). It catalyses the reaction hydrogencarbonate + NH4(+) + 2 ATP = carbamoyl phosphate + 2 ADP + phosphate + 2 H(+). It participates in amino-acid biosynthesis; L-arginine biosynthesis; carbamoyl phosphate from bicarbonate: step 1/1. The protein operates within pyrimidine metabolism; UMP biosynthesis via de novo pathway; (S)-dihydroorotate from bicarbonate: step 1/3. Its function is as follows. Large subunit of the glutamine-dependent carbamoyl phosphate synthetase (CPSase). CPSase catalyzes the formation of carbamoyl phosphate from the ammonia moiety of glutamine, carbonate, and phosphate donated by ATP, constituting the first step of 2 biosynthetic pathways, one leading to arginine and/or urea and the other to pyrimidine nucleotides. The large subunit (synthetase) binds the substrates ammonia (free or transferred from glutamine from the small subunit), hydrogencarbonate and ATP and carries out an ATP-coupled ligase reaction, activating hydrogencarbonate by forming carboxy phosphate which reacts with ammonia to form carbamoyl phosphate. The chain is Carbamoyl phosphate synthase large chain from Saccharolobus solfataricus (strain ATCC 35092 / DSM 1617 / JCM 11322 / P2) (Sulfolobus solfataricus).